The sequence spans 74 residues: Translation initiation factor IF-1, chloroplastic (74 aa).

Residues Met1 to Arg72 enclose the S1-like domain.

This sequence belongs to the IF-1 family. Component of the 30S ribosomal translation pre-initiation complex which assembles on the 30S ribosome in the order IF-2 and IF-3, IF-1 and N-formylmethionyl-tRNA(fMet); mRNA recruitment can occur at any time during PIC assembly.

The protein localises to the plastid. It is found in the chloroplast. Functionally, one of the essential components for the initiation of protein synthesis. Stabilizes the binding of IF-2 and IF-3 on the 30S subunit to which N-formylmethionyl-tRNA(fMet) subsequently binds. Helps modulate mRNA selection, yielding the 30S pre-initiation complex (PIC). Upon addition of the 50S ribosomal subunit IF-1, IF-2 and IF-3 are released leaving the mature 70S translation initiation complex. This chain is Translation initiation factor IF-1, chloroplastic, found in Mesostigma viride (Green alga).